Here is a 260-residue protein sequence, read N- to C-terminus: Ubiquinone/menaquinone biosynthesis C-methyltransferase UbiE (260 aa).

S-adenosyl-L-methionine-binding positions include Thr-83, Asp-104, and 132–133 (NA).

It belongs to the class I-like SAM-binding methyltransferase superfamily. MenG/UbiE family.

The catalysed reaction is a 2-demethylmenaquinol + S-adenosyl-L-methionine = a menaquinol + S-adenosyl-L-homocysteine + H(+). The enzyme catalyses a 2-methoxy-6-(all-trans-polyprenyl)benzene-1,4-diol + S-adenosyl-L-methionine = a 5-methoxy-2-methyl-3-(all-trans-polyprenyl)benzene-1,4-diol + S-adenosyl-L-homocysteine + H(+). It participates in quinol/quinone metabolism; menaquinone biosynthesis; menaquinol from 1,4-dihydroxy-2-naphthoate: step 2/2. It functions in the pathway cofactor biosynthesis; ubiquinone biosynthesis. Methyltransferase required for the conversion of demethylmenaquinol (DMKH2) to menaquinol (MKH2) and the conversion of 2-polyprenyl-6-methoxy-1,4-benzoquinol (DDMQH2) to 2-polyprenyl-3-methyl-6-methoxy-1,4-benzoquinol (DMQH2). In Bartonella bacilliformis (strain ATCC 35685 / KC583 / Herrer 020/F12,63), this protein is Ubiquinone/menaquinone biosynthesis C-methyltransferase UbiE.